Reading from the N-terminus, the 318-residue chain is Protein-L-histidine N-pros-methyltransferase (318 aa).

Residues 1-18 form the signal peptide; that stretch reads MRLLAGWLCLSLASVWLA. Residue N35 is glycosylated (N-linked (GlcNAc...) asparagine). S-adenosyl-L-homocysteine contacts are provided by E174, N210, and Y295.

Belongs to the METTL9 family.

Its subcellular location is the endoplasmic reticulum. It localises to the mitochondrion. The catalysed reaction is L-histidyl-[protein] + S-adenosyl-L-methionine = N(pros)-methyl-L-histidyl-[protein] + S-adenosyl-L-homocysteine + H(+). Its function is as follows. Protein-histidine N-methyltransferase that specifically catalyzes 1-methylhistidine (pros-methylhistidine) methylation of target proteins. Specifically methylates the second His of proteins with a His-x-His (HxH) motif (where 'x' is preferably a small amino acid), while exploiting the first one as a recognition signature. Catalyzes methylation of target proteins such as S100A9, NDUFB3, SLC39A5, SLC39A7, ARMC6 and DNAJB12; 1-methylhistidine modification may affect the binding of zinc and other metals to its target proteins. Constitutes the main methyltransferase for the 1-methylhistidine modification in cell. In Homo sapiens (Human), this protein is Protein-L-histidine N-pros-methyltransferase.